We begin with the raw amino-acid sequence, 529 residues long: Bifunctional purine biosynthesis protein PurH (529 aa).

An MGS-like domain is found at 1–148 (MQQRRPVRRA…KNHKDVAIVV (148 aa)). Lysine 287 is subject to N6-acetyllysine.

This sequence belongs to the PurH family.

The enzyme catalyses (6R)-10-formyltetrahydrofolate + 5-amino-1-(5-phospho-beta-D-ribosyl)imidazole-4-carboxamide = 5-formamido-1-(5-phospho-D-ribosyl)imidazole-4-carboxamide + (6S)-5,6,7,8-tetrahydrofolate. The catalysed reaction is IMP + H2O = 5-formamido-1-(5-phospho-D-ribosyl)imidazole-4-carboxamide. The protein operates within purine metabolism; IMP biosynthesis via de novo pathway; 5-formamido-1-(5-phospho-D-ribosyl)imidazole-4-carboxamide from 5-amino-1-(5-phospho-D-ribosyl)imidazole-4-carboxamide (10-formyl THF route): step 1/1. It functions in the pathway purine metabolism; IMP biosynthesis via de novo pathway; IMP from 5-formamido-1-(5-phospho-D-ribosyl)imidazole-4-carboxamide: step 1/1. The sequence is that of Bifunctional purine biosynthesis protein PurH from Escherichia coli O157:H7.